Here is a 308-residue protein sequence, read N- to C-terminus: Glutaminase (308 aa).

Residues Ser-65, Asn-116, Glu-161, Asn-168, Tyr-192, Tyr-244, and Val-262 each contribute to the substrate site.

This sequence belongs to the glutaminase family. In terms of assembly, homotetramer.

The enzyme catalyses L-glutamine + H2O = L-glutamate + NH4(+). The chain is Glutaminase from Geobacillus kaustophilus (strain HTA426).